Here is a 729-residue protein sequence, read N- to C-terminus: Elongation factor 2 (729 aa).

In terms of domain architecture, tr-type G spans 19-262; it reads EQIRNIAIAA…MVCEHFPNPI (244 aa). Residues 28-35, 94-98, and 148-151 each bind GTP; these read AHVDHGKT, DTPGH, and NKVD. His-597 is subject to Diphthamide.

Belongs to the TRAFAC class translation factor GTPase superfamily. Classic translation factor GTPase family. EF-G/EF-2 subfamily.

Its subcellular location is the cytoplasm. Catalyzes the GTP-dependent ribosomal translocation step during translation elongation. During this step, the ribosome changes from the pre-translocational (PRE) to the post-translocational (POST) state as the newly formed A-site-bound peptidyl-tRNA and P-site-bound deacylated tRNA move to the P and E sites, respectively. Catalyzes the coordinated movement of the two tRNA molecules, the mRNA and conformational changes in the ribosome. This chain is Elongation factor 2, found in Halomicrobium mukohataei (strain ATCC 700874 / DSM 12286 / JCM 9738 / NCIMB 13541) (Haloarcula mukohataei).